A 206-amino-acid polypeptide reads, in one-letter code: Dephospho-CoA kinase (206 aa).

The DPCK domain occupies I4–K204. ATP is bound at residue G12–T17.

This sequence belongs to the CoaE family.

It is found in the cytoplasm. It catalyses the reaction 3'-dephospho-CoA + ATP = ADP + CoA + H(+). The protein operates within cofactor biosynthesis; coenzyme A biosynthesis; CoA from (R)-pantothenate: step 5/5. Its function is as follows. Catalyzes the phosphorylation of the 3'-hydroxyl group of dephosphocoenzyme A to form coenzyme A. The sequence is that of Dephospho-CoA kinase from Haemophilus influenzae (strain ATCC 51907 / DSM 11121 / KW20 / Rd).